The chain runs to 201 residues: Holliday junction resolvase RecU (201 aa).

Residues methionine 1–proline 26 are disordered. Residues threonine 87, aspartate 89, glutamate 102, and glutamine 121 each contribute to the Mg(2+) site.

The protein belongs to the RecU family. It depends on Mg(2+) as a cofactor.

The protein resides in the cytoplasm. It carries out the reaction Endonucleolytic cleavage at a junction such as a reciprocal single-stranded crossover between two homologous DNA duplexes (Holliday junction).. In terms of biological role, endonuclease that resolves Holliday junction intermediates in genetic recombination. Cleaves mobile four-strand junctions by introducing symmetrical nicks in paired strands. Promotes annealing of linear ssDNA with homologous dsDNA. Required for DNA repair, homologous recombination and chromosome segregation. In Listeria monocytogenes serotype 4a (strain HCC23), this protein is Holliday junction resolvase RecU.